The primary structure comprises 90 residues: Acylphosphatase (90 aa).

An Acylphosphatase-like domain is found at 3–90 (HYHAIITGRV…AHYQDFRIKG (88 aa)). Residues Arg18 and Asn36 contribute to the active site.

This sequence belongs to the acylphosphatase family.

The enzyme catalyses an acyl phosphate + H2O = a carboxylate + phosphate + H(+). This is Acylphosphatase (acyP) from Bacillus pumilus (strain SAFR-032).